The primary structure comprises 99 residues: A-type ATP synthase subunit F (99 aa).

It belongs to the V-ATPase F subunit family. In terms of assembly, has multiple subunits with at least A(3), B(3), C, D, E, F, H, I and proteolipid K(x).

Its subcellular location is the cell membrane. Its function is as follows. Component of the A-type ATP synthase that produces ATP from ADP in the presence of a proton gradient across the membrane. The protein is A-type ATP synthase subunit F of Methanothrix thermoacetophila (strain DSM 6194 / JCM 14653 / NBRC 101360 / PT) (Methanosaeta thermophila).